A 348-amino-acid polypeptide reads, in one-letter code: 4-hydroxy-2-oxovalerate aldolase (348 aa).

Residues 9–261 (ITVHDMTLRD…RTGVDVWKIQ (253 aa)) form the Pyruvate carboxyltransferase domain. Residue 17-18 (RD) participates in substrate binding. Aspartate 18 contributes to the Mn(2+) binding site. Catalysis depends on histidine 21, which acts as the Proton acceptor. Serine 171 and histidine 200 together coordinate substrate. 2 residues coordinate Mn(2+): histidine 200 and histidine 202. Residue tyrosine 291 coordinates substrate.

The protein belongs to the 4-hydroxy-2-oxovalerate aldolase family.

It catalyses the reaction (S)-4-hydroxy-2-oxopentanoate = acetaldehyde + pyruvate. The sequence is that of 4-hydroxy-2-oxovalerate aldolase from Ralstonia pickettii (strain 12J).